The sequence spans 60 residues: Large ribosomal subunit protein bL32 (60 aa).

The protein belongs to the bacterial ribosomal protein bL32 family.

The polypeptide is Large ribosomal subunit protein bL32 (Ehrlichia ruminantium (strain Gardel)).